We begin with the raw amino-acid sequence, 662 residues long: Retaining alpha-galactosidase (662 aa).

A signal peptide spans 1–19; that stretch reads MKKLTFLLLCVLCTLSLQA. E174 is a Ca(2+) binding site. D415 functions as the Nucleophile in the catalytic mechanism. Residues E464 and E470 each coordinate Ca(2+). E470 (proton donor/acceptor) is an active-site residue.

Belongs to the glycosyl hydrolase 97 family. Monomer. Ca(2+) serves as cofactor.

It catalyses the reaction Hydrolysis of terminal, non-reducing alpha-D-galactose residues in alpha-D-galactosides, including galactose oligosaccharides, galactomannans and galactolipids.. With respect to regulation, inhibited by EDTA in vitro. Galactosidase that is able to hydrolyze the alpha-1,6 disaccharide melibiose and the synthetic p-nitrophenyl alpha-galactoside substrate (pNP-Gal), with retention of the anomeric configuration. Does not hydrolyze DNP-Glc or pNP-Glc. This Bacteroides thetaiotaomicron (strain ATCC 29148 / DSM 2079 / JCM 5827 / CCUG 10774 / NCTC 10582 / VPI-5482 / E50) protein is Retaining alpha-galactosidase.